A 249-amino-acid chain; its full sequence is tRNA (guanine-N(1)-)-methyltransferase (249 aa).

S-adenosyl-L-methionine contacts are provided by residues glycine 113 and 133 to 138; that span reads IGDFVV.

The protein belongs to the RNA methyltransferase TrmD family. In terms of assembly, homodimer.

Its subcellular location is the cytoplasm. The catalysed reaction is guanosine(37) in tRNA + S-adenosyl-L-methionine = N(1)-methylguanosine(37) in tRNA + S-adenosyl-L-homocysteine + H(+). Its function is as follows. Specifically methylates guanosine-37 in various tRNAs. In Neisseria gonorrhoeae (strain ATCC 700825 / FA 1090), this protein is tRNA (guanine-N(1)-)-methyltransferase.